The following is a 354-amino-acid chain: Rhodopsin (354 aa).

Residues 1–36 (MNGTEGPNFYIPMSNKTGVVRSPFDYPQYYLAEPWK) are Extracellular-facing. Asparagine 2 is a glycosylation site (N-linked (GlcNAc...) (hybrid) asparagine). A glycan (N-linked (GlcNAc...) asparagine) is linked at asparagine 15. Residues 37-61 (YSVLAAYMFLLILLGLPINFMTLYV) form a helical membrane-spanning segment. The Cytoplasmic segment spans residues 62-73 (TIQHKKLRTPLN). The chain crosses the membrane as a helical span at residues 74–96 (YILLNLGVCNHFMVLCGFTITMY). Residues 97 to 110 (TSLHGYFVFGQTGC) are Extracellular-facing. A disulfide bridge connects residues cysteine 110 and cysteine 187. Residues 111-133 (YFEGFFATLGGEIALWSLVVLAI) form a helical membrane-spanning segment. The 'Ionic lock' involved in activated form stabilization signature appears at 134-136 (ERY). Residues 134–152 (ERYIVVCKPMSNFRFGENH) are Cytoplasmic-facing. Residues 153–173 (AMMGVAFTWIMALACAVPPLF) form a helical membrane-spanning segment. Topologically, residues 174-202 (GWSRYIPEGMQCSCGVDYYTLKPEVNNES) are extracellular. A helical membrane pass occupies residues 203-224 (FVIYMFVVHFLIPLIIISFCYG). Residues 225 to 252 (RLVCTVKEAAAQQQESATTQKAEKEVTR) are Cytoplasmic-facing. The helical transmembrane segment at 253–274 (MVIIMVIFFLICWVPYAYVAFY) threads the bilayer. Residues 275–286 (IFTHQGSEFGPI) are Extracellular-facing. Residues 287–308 (FMTVPAFFAKSSAIYNPVIYIM) traverse the membrane as a helical segment. Residue lysine 296 is modified to N6-(retinylidene)lysine. At 309–354 (LNKQFRNCMITTLCCGKNPFGDDDASSAATSKTEATSVSTSQVSPA) the chain is on the cytoplasmic side. S-palmitoyl cysteine attachment occurs at residues cysteine 322 and cysteine 323. Residues 332 to 354 (DASSAATSKTEATSVSTSQVSPA) are disordered. A compositionally biased stretch (low complexity) spans 334-354 (SSAATSKTEATSVSTSQVSPA).

The protein belongs to the G-protein coupled receptor 1 family. Opsin subfamily. Post-translationally, contains one covalently linked retinal chromophore. Upon light absorption, the covalently bound 11-cis-retinal is converted to all-trans-retinal. After hydrolysis of the Schiff base and release of the covalently bound all-trans-retinal, active rhodopsin is regenerated by binding of a fresh molecule of 11-cis-retinal. In terms of tissue distribution, detected in retina rod photoreceptor cell outer segments (at protein level). Detected in retina.

The protein resides in the membrane. The protein localises to the cell projection. It localises to the cilium. Its subcellular location is the photoreceptor outer segment. In terms of biological role, photoreceptor required for image-forming vision at low light intensity. Required for photoreceptor cell viability after birth. Light-induced isomerization of 11-cis to all-trans retinal triggers a conformational change that activates signaling via G-proteins. Subsequent receptor phosphorylation mediates displacement of the bound G-protein alpha subunit by arrestin and terminates signaling. The polypeptide is Rhodopsin (RHO) (Lithobates pipiens (Northern leopard frog)).